Consider the following 607-residue polypeptide: UvrABC system protein C (607 aa).

A GIY-YIG domain is found at 16 to 94 (GRPGVYRMFD…IKEWRPPYNI (79 aa)). A UVR domain is found at 203-238 (NALTDELSAGMEQAASTLDFEKAAELRDQISLLRRV).

This sequence belongs to the UvrC family. Interacts with UvrB in an incision complex.

The protein localises to the cytoplasm. In terms of biological role, the UvrABC repair system catalyzes the recognition and processing of DNA lesions. UvrC both incises the 5' and 3' sides of the lesion. The N-terminal half is responsible for the 3' incision and the C-terminal half is responsible for the 5' incision. The sequence is that of UvrABC system protein C from Pseudomonas protegens (strain DSM 19095 / LMG 27888 / CFBP 6595 / CHA0).